The chain runs to 348 residues: MKFNEISEKLSPLVTNSSLTTHPDLNPDITAVAAVDEAVTGQLSYIEGGKFAAMVQKTAASALILPRDEALQAQATEKDIAWITTPEPRLLFAHAIKLFYQPFHPSPGIHPTAVIDSSVKLGKDIYIGPHVVIEQGVTIGDNACIHANVVIYPGVSIGDRTILHANCTIHERSQIGDNCVIHSGAAIGSEGFGFVPTPDGWFKMEQSGYVVLEDGVEIGCNSAVDRPAVGTTRVGRNTKIDNLVQVAHNCQISENCVFASQVGLAGGVKVGKRVILAGQVGVANQANIGDGVIASAQTGIPHDIAPGEIVSSSPAVPNKLYLKASAIYKRLPEMYQTLKRLQKKLEES.

The Proton acceptor role is filled by His-248.

Belongs to the transferase hexapeptide repeat family. LpxD subfamily. Homotrimer.

It catalyses the reaction a UDP-3-O-[(3R)-3-hydroxyacyl]-alpha-D-glucosamine + a (3R)-hydroxyacyl-[ACP] = a UDP-2-N,3-O-bis[(3R)-3-hydroxyacyl]-alpha-D-glucosamine + holo-[ACP] + H(+). It participates in bacterial outer membrane biogenesis; LPS lipid A biosynthesis. In terms of biological role, catalyzes the N-acylation of UDP-3-O-acylglucosamine using 3-hydroxyacyl-ACP as the acyl donor. Is involved in the biosynthesis of lipid A, a phosphorylated glycolipid that anchors the lipopolysaccharide to the outer membrane of the cell. The sequence is that of UDP-3-O-acylglucosamine N-acyltransferase from Rippkaea orientalis (strain PCC 8801 / RF-1) (Cyanothece sp. (strain PCC 8801)).